The sequence spans 353 residues: Quinolinate synthase (353 aa).

Residues histidine 47 and serine 68 each contribute to the iminosuccinate site. Cysteine 113 contributes to the [4Fe-4S] cluster binding site. Residues tyrosine 139 to asparagine 141 and serine 156 each bind iminosuccinate. A [4Fe-4S] cluster-binding site is contributed by cysteine 200. Residues histidine 226–glutamate 228 and threonine 243 contribute to the iminosuccinate site. Cysteine 297 serves as a coordination point for [4Fe-4S] cluster.

Belongs to the quinolinate synthase family. Type 1 subfamily. The cofactor is [4Fe-4S] cluster.

The protein localises to the cytoplasm. The catalysed reaction is iminosuccinate + dihydroxyacetone phosphate = quinolinate + phosphate + 2 H2O + H(+). The protein operates within cofactor biosynthesis; NAD(+) biosynthesis; quinolinate from iminoaspartate: step 1/1. Functionally, catalyzes the condensation of iminoaspartate with dihydroxyacetone phosphate to form quinolinate. This is Quinolinate synthase from Pectobacterium carotovorum subsp. carotovorum (strain PC1).